Here is a 120-residue protein sequence, read N- to C-terminus: Large ribosomal subunit protein uL18 (120 aa).

This sequence belongs to the universal ribosomal protein uL18 family. In terms of assembly, part of the 50S ribosomal subunit; part of the 5S rRNA/L5/L18/L25 subcomplex. Contacts the 5S and 23S rRNAs.

In terms of biological role, this is one of the proteins that bind and probably mediate the attachment of the 5S RNA into the large ribosomal subunit, where it forms part of the central protuberance. The protein is Large ribosomal subunit protein uL18 of Treponema pallidum (strain Nichols).